The chain runs to 142 residues: uncharacterized protein (142 aa).

The disordered stretch occupies residues 1 to 31 (MSLPKKKKPEVEEEEKPEEEEEKEEEQEIDI). The segment covering 11–29 (VEEEEKPEEEEEKEEEQEI) has biased composition (acidic residues).

This is an uncharacterized protein from Acidianus sp. F28 (AFV-2).